A 756-amino-acid chain; its full sequence is 5-methyltetrahydropteroyltriglutamate--homocysteine methyltransferase (756 aa).

5-methyltetrahydropteroyltri-L-glutamate-binding positions include Arg-16–Lys-19 and Lys-116. L-homocysteine-binding positions include Ile-433–Ser-435 and Glu-486. Residues Ile-433 to Ser-435 and Glu-486 each bind L-methionine. 5-methyltetrahydropteroyltri-L-glutamate-binding positions include Arg-517 to Cys-518 and Trp-563. Asp-601 lines the L-homocysteine pocket. Asp-601 serves as a coordination point for L-methionine. Glu-607 is a 5-methyltetrahydropteroyltri-L-glutamate binding site. The Zn(2+) site is built by His-643, Cys-645, and Glu-667. Catalysis depends on His-696, which acts as the Proton donor. Residue Cys-728 participates in Zn(2+) binding.

Belongs to the vitamin-B12 independent methionine synthase family. The cofactor is Zn(2+).

It catalyses the reaction 5-methyltetrahydropteroyltri-L-glutamate + L-homocysteine = tetrahydropteroyltri-L-glutamate + L-methionine. Its pathway is amino-acid biosynthesis; L-methionine biosynthesis via de novo pathway; L-methionine from L-homocysteine (MetE route): step 1/1. Catalyzes the transfer of a methyl group from 5-methyltetrahydrofolate to homocysteine resulting in methionine formation. The polypeptide is 5-methyltetrahydropteroyltriglutamate--homocysteine methyltransferase (Buchnera aphidicola subsp. Baizongia pistaciae (strain Bp)).